We begin with the raw amino-acid sequence, 249 residues long: Spindlin-4 (249 aa).

Tudor-like domain stretches follow at residues 41–90 (VGCR…LELH), 119–168 (VGKA…YTLL), and 201–246 (VGKQ…YGLV). Histone H3K4me3 and H3R8me2a binding regions lie at residues 80-85 (GKDSVY), Glu128, and 237-239 (DIH).

Belongs to the SPIN/STSY family. As to quaternary structure, interacts with C11orf84/SPINDOC. Associates with chromatin.

The protein resides in the cytoplasm. The protein localises to the nucleus. In terms of biological role, binds to acetylated and methylated histones, including H3K4me3 and H4K20me3, probably acting as a histone reader that recognizes chromatin marks to mediate downstream cellular effects. Promotes canonical WNT signaling, and is involved in the down-regulation of cell proliferation. This Mus musculus (Mouse) protein is Spindlin-4 (Spin4).